The primary structure comprises 78 residues: D-alanyl carrier protein (78 aa).

One can recognise a Carrier domain in the interval 1 to 78 (MDFKQEVLDV…NIVNQLSELK (78 aa)). Ser-36 is subject to O-(pantetheine 4'-phosphoryl)serine.

This sequence belongs to the DltC family. Post-translationally, 4'-phosphopantetheine is transferred from CoA to a specific serine of apo-DCP.

It localises to the cytoplasm. It participates in cell wall biogenesis; lipoteichoic acid biosynthesis. Functionally, carrier protein involved in the D-alanylation of lipoteichoic acid (LTA). The loading of thioester-linked D-alanine onto DltC is catalyzed by D-alanine--D-alanyl carrier protein ligase DltA. The DltC-carried D-alanyl group is further transferred to cell membrane phosphatidylglycerol (PG) by forming an ester bond, probably catalyzed by DltD. D-alanylation of LTA plays an important role in modulating the properties of the cell wall in Gram-positive bacteria, influencing the net charge of the cell wall. The polypeptide is D-alanyl carrier protein (Bacillus subtilis (strain 168)).